A 310-amino-acid polypeptide reads, in one-letter code: Collagen-like protein V6 (310 aa).

Residues 1–41 are compositionally biased toward polar residues; sequence MSLSTLFSPNTYNINSKSQTLNNLPSNPTSQTNTLWSNNAY. Residues 1–183 are disordered; that stretch reads MSLSTLFSPN…GDPGAKGDPG (183 aa). Collagen-like domains follow at residues 61 to 119 and 123 to 182; these read GQKG…KGQA and GLKG…KGDP. Residues 92 to 101 are compositionally biased toward basic and acidic residues; it reads SGDKGDKGDS. Residues Asn227 and Asn264 are each glycosylated (N-linked (GlcNAc...) asparagine; by host).

It belongs to the sputnik virus V6 family.

The polypeptide is Collagen-like protein V6 (Sputnik virophage).